The chain runs to 369 residues: 3-dehydroquinate synthase (369 aa).

Residues 110–114 (GVIGD), 134–135 (TT), K147, K156, and 174–177 (TLKT) contribute to the NAD(+) site. Residues E189, H254, and H271 each contribute to the Zn(2+) site.

This sequence belongs to the sugar phosphate cyclases superfamily. Dehydroquinate synthase family. Requires Co(2+) as cofactor. The cofactor is Zn(2+). It depends on NAD(+) as a cofactor.

It localises to the cytoplasm. The catalysed reaction is 7-phospho-2-dehydro-3-deoxy-D-arabino-heptonate = 3-dehydroquinate + phosphate. The protein operates within metabolic intermediate biosynthesis; chorismate biosynthesis; chorismate from D-erythrose 4-phosphate and phosphoenolpyruvate: step 2/7. Its function is as follows. Catalyzes the conversion of 3-deoxy-D-arabino-heptulosonate 7-phosphate (DAHP) to dehydroquinate (DHQ). This is 3-dehydroquinate synthase from Cyanothece sp. (strain PCC 7425 / ATCC 29141).